The chain runs to 341 residues: tRNA N6-adenosine threonylcarbamoyltransferase (341 aa).

The Fe cation site is built by histidine 111 and histidine 115. Substrate is bound by residues leucine 134–glycine 138, aspartate 167, glycine 180, and asparagine 276. Position 304 (aspartate 304) interacts with Fe cation.

This sequence belongs to the KAE1 / TsaD family. Requires Fe(2+) as cofactor.

It is found in the cytoplasm. The catalysed reaction is L-threonylcarbamoyladenylate + adenosine(37) in tRNA = N(6)-L-threonylcarbamoyladenosine(37) in tRNA + AMP + H(+). Required for the formation of a threonylcarbamoyl group on adenosine at position 37 (t(6)A37) in tRNAs that read codons beginning with adenine. Is involved in the transfer of the threonylcarbamoyl moiety of threonylcarbamoyl-AMP (TC-AMP) to the N6 group of A37, together with TsaE and TsaB. TsaD likely plays a direct catalytic role in this reaction. In Ectopseudomonas mendocina (strain ymp) (Pseudomonas mendocina), this protein is tRNA N6-adenosine threonylcarbamoyltransferase.